A 276-amino-acid polypeptide reads, in one-letter code: Proteasome subunit beta type-8 (276 aa).

Positions 1 to 33 are disordered; the sequence is MALLDVCGAPRGQRPESALPVAGSGRRSDPGHY. The propeptide at 1 to 72 is removed in mature form; that stretch reads MALLDVCGAP…RNVQIEMAHG (72 aa). Position 5 is a phosphothreonine (Asp5). Thr73 functions as the Nucleophile in the catalytic mechanism.

The protein belongs to the peptidase T1B family. In terms of assembly, the 26S proteasome consists of a 20S proteasome core and two 19S regulatory subunits. The 20S proteasome core is composed of 28 subunits that are arranged in four stacked rings, resulting in a barrel-shaped structure. The two end rings are each formed by seven alpha subunits, and the two central rings are each formed by seven beta subunits. The catalytic chamber with the active sites is on the inside of the barrel. Component of the immunoproteasome, where it displaces the equivalent housekeeping subunit PSMB5. Component of the spermatoproteasome, a form of the proteasome specifically found in testis. Directly interacts with POMP. Interacts with TAP1. As to quaternary structure, (Microbial infection) Interacts with HIV-1 TAT protein. In terms of processing, autocleaved. The resulting N-terminal Thr residue of the mature subunit is responsible for the nucleophile proteolytic activity.

It is found in the cytoplasm. The protein localises to the nucleus. The catalysed reaction is Cleavage of peptide bonds with very broad specificity.. In terms of biological role, the proteasome is a multicatalytic proteinase complex which is characterized by its ability to cleave peptides with Arg, Phe, Tyr, Leu, and Glu adjacent to the leaving group at neutral or slightly basic pH. The proteasome has an ATP-dependent proteolytic activity. This subunit is involved in antigen processing to generate class I binding peptides. Replacement of PSMB5 by PSMB8 increases the capacity of the immunoproteasome to cleave model peptides after hydrophobic and basic residues. Involved in the generation of spliced peptides resulting from the ligation of two separate proteasomal cleavage products that are not contiguous in the parental protein. Acts as a major component of interferon gamma-induced sensitivity. Plays a key role in apoptosis via the degradation of the apoptotic inhibitor MCL1. May be involved in the inflammatory response pathway. In cancer cells, substitution of isoform 1 (E2) by isoform 2 (E1) results in immunoproteasome deficiency. Required for the differentiation of preadipocytes into adipocytes. The polypeptide is Proteasome subunit beta type-8 (PSMB8) (Homo sapiens (Human)).